We begin with the raw amino-acid sequence, 329 residues long: Serine dehydratase-like (329 aa).

At methionine 1 the chain carries N-acetylmethionine. Residue lysine 48 is modified to N6-(pyridoxal phosphate)lysine.

This sequence belongs to the serine/threonine dehydratase family. In terms of assembly, monomer. Homodimer. It depends on pyridoxal 5'-phosphate as a cofactor. In terms of tissue distribution, expressed in lung cancer cell lines.

It catalyses the reaction L-serine = pyruvate + NH4(+). The catalysed reaction is L-threonine = 2-oxobutanoate + NH4(+). The enzyme catalyses L-glutamate = D-glutamate. In terms of biological role, catalyzes the pyridoxal-phosphate-dependent dehydrative deamination of L-threonine and L-serine to ammonia and alpha-ketobutyrate and pyruvate, respectively. Also exhibits racemase activity towards L-glutamate and D-glutamate. This Homo sapiens (Human) protein is Serine dehydratase-like (SDSL).